Reading from the N-terminus, the 200-residue chain is Probable molybdenum cofactor guanylyltransferase (200 aa).

GTP-binding positions include 9–11, Lys-21, Asp-69, and Asp-100; that span reads LAG. A Mg(2+)-binding site is contributed by Asp-100.

Belongs to the MobA family. Requires Mg(2+) as cofactor.

The protein localises to the cytoplasm. The enzyme catalyses Mo-molybdopterin + GTP + H(+) = Mo-molybdopterin guanine dinucleotide + diphosphate. In terms of biological role, transfers a GMP moiety from GTP to Mo-molybdopterin (Mo-MPT) cofactor (Moco or molybdenum cofactor) to form Mo-molybdopterin guanine dinucleotide (Mo-MGD) cofactor. In Bacillus cereus (strain G9842), this protein is Probable molybdenum cofactor guanylyltransferase.